A 173-amino-acid polypeptide reads, in one-letter code: NADH-ubiquinone oxidoreductase chain 6 (173 aa).

A run of 6 helical transmembrane segments spans residues Met1–Ser21, Tyr27–Gly47, Val48–Val68, Trp85–Gly105, Gly106–Val126, and Cys139–Leu159.

Belongs to the complex I subunit 6 family.

It localises to the mitochondrion membrane. The catalysed reaction is a ubiquinone + NADH + 5 H(+)(in) = a ubiquinol + NAD(+) + 4 H(+)(out). Functionally, core subunit of the mitochondrial membrane respiratory chain NADH dehydrogenase (Complex I) that is believed to belong to the minimal assembly required for catalysis. Complex I functions in the transfer of electrons from NADH to the respiratory chain. The immediate electron acceptor for the enzyme is believed to be ubiquinone. The chain is NADH-ubiquinone oxidoreductase chain 6 (MT-ND6) from Aethia psittacula (Parakeet auklet).